The primary structure comprises 152 residues: uncharacterized protein (152 aa).

Residues 12-34 (ALLYLGGGLLAMIYGLITFFMAF) form a helical membrane-spanning segment.

This sequence to B.subtilis YfjD.

It localises to the membrane. This is an uncharacterized protein from Bacillus subtilis (strain 168).